A 317-amino-acid polypeptide reads, in one-letter code: Beta-ketoacyl-[acyl-carrier-protein] synthase III (317 aa).

Active-site residues include cysteine 112 and histidine 244. The interval 245–249 (QANLR) is ACP-binding. Asparagine 274 is an active-site residue.

Belongs to the thiolase-like superfamily. FabH family. Homodimer.

The protein localises to the cytoplasm. It carries out the reaction malonyl-[ACP] + acetyl-CoA + H(+) = 3-oxobutanoyl-[ACP] + CO2 + CoA. Its pathway is lipid metabolism; fatty acid biosynthesis. Functionally, catalyzes the condensation reaction of fatty acid synthesis by the addition to an acyl acceptor of two carbons from malonyl-ACP. Catalyzes the first condensation reaction which initiates fatty acid synthesis and may therefore play a role in governing the total rate of fatty acid production. Possesses both acetoacetyl-ACP synthase and acetyl transacylase activities. Its substrate specificity determines the biosynthesis of branched-chain and/or straight-chain of fatty acids. This is Beta-ketoacyl-[acyl-carrier-protein] synthase III from Salmonella typhimurium (strain LT2 / SGSC1412 / ATCC 700720).